Here is a 219-residue protein sequence, read N- to C-terminus: Octanoyltransferase (219 aa).

Residues 31–206 (TASADEIWLV…ECLRLMKASA (176 aa)) form the BPL/LPL catalytic domain. Substrate-binding positions include 70-77 (RGGQVTFH), 137-139 (SLG), and 150-152 (GLA). Cys-168 acts as the Acyl-thioester intermediate in catalysis.

Belongs to the LipB family.

The protein resides in the cytoplasm. It carries out the reaction octanoyl-[ACP] + L-lysyl-[protein] = N(6)-octanoyl-L-lysyl-[protein] + holo-[ACP] + H(+). The protein operates within protein modification; protein lipoylation via endogenous pathway; protein N(6)-(lipoyl)lysine from octanoyl-[acyl-carrier-protein]: step 1/2. Functionally, catalyzes the transfer of endogenously produced octanoic acid from octanoyl-acyl-carrier-protein onto the lipoyl domains of lipoate-dependent enzymes. Lipoyl-ACP can also act as a substrate although octanoyl-ACP is likely to be the physiological substrate. In Sodalis glossinidius (strain morsitans), this protein is Octanoyltransferase.